The sequence spans 440 residues: Transposon Ty1-MR1 Gag polyprotein (440 aa).

3 stretches are compositionally biased toward polar residues: residues 1–31, 46–60, and 137–168; these read MESQ…TTQD, VSTQ…TPLS, and VGTH…TNQH. Disordered regions lie at residues 1–88, 137–174, and 350–424; these read MESQ…YPQQ, VGTH…PPPI, and QQES…TTEP. The RNA-binding stretch occupies residues 299 to 401; sequence NNGIPINNKV…NSQSRTARAH (103 aa). Residues 363 to 372 are compositionally biased toward basic and acidic residues; the sequence is SPSDEKKDSR. Positions 373–411 are enriched in polar residues; that stretch reads TYTNTTKPKSITRNSQKPNNSQSRTARAHNVSTFNNSPG.

Homotrimer.

The protein localises to the cytoplasm. Its function is as follows. Capsid protein (CA) is the structural component of the virus-like particle (VLP), forming the shell that encapsulates the retrotransposons dimeric RNA genome. The particles are assembled from trimer-clustered units and there are holes in the capsid shells that allow for the diffusion of macromolecules. CA also has nucleocapsid-like chaperone activity, promoting primer tRNA(i)-Met annealing to the multipartite primer-binding site (PBS), dimerization of Ty1 RNA and initiation of reverse transcription. The sequence is that of Transposon Ty1-MR1 Gag polyprotein (TY1A-MR1) from Saccharomyces cerevisiae (strain ATCC 204508 / S288c) (Baker's yeast).